Reading from the N-terminus, the 347-residue chain is NADH-ubiquinone oxidoreductase chain 2 (347 aa).

11 helical membrane-spanning segments follow: residues 3-23 (PPILIIIMSTVMSGTMIVLTS), 25-45 (HWLLIWIGFEMNMLAIIPILM), 60-80 (FLTQATASMLLMMGIIINLMF), 96-116 (GLVTIALTMKLGMAPFHFWVP), 122-142 (ISLSSGMILLTWQKIAPLSIL), 153-173 (LLITMAIASVLIGGWGGLNQT), 178-198 (ILAYSSIAHMGWMAVILTYNP), 200-220 (LMILNLTIYITMTLSTFMLFM), 237-257 (LPLMTSLILVLMMSLGGLPPL), 274-294 (DMIILPTFMAITALLNLYFYM), and 323-343 (IILLPPLIIISTMLLPMTPMM).

The protein belongs to the complex I subunit 2 family. Core subunit of respiratory chain NADH dehydrogenase (Complex I) which is composed of 45 different subunits. Interacts with TMEM242.

The protein resides in the mitochondrion inner membrane. The enzyme catalyses a ubiquinone + NADH + 5 H(+)(in) = a ubiquinol + NAD(+) + 4 H(+)(out). Core subunit of the mitochondrial membrane respiratory chain NADH dehydrogenase (Complex I) which catalyzes electron transfer from NADH through the respiratory chain, using ubiquinone as an electron acceptor. Essential for the catalytic activity and assembly of complex I. The polypeptide is NADH-ubiquinone oxidoreductase chain 2 (Halichoerus grypus (Gray seal)).